Consider the following 171-residue polypeptide: uncharacterized protein (171 aa).

This is an uncharacterized protein from Bacillus subtilis (strain 168).